The sequence spans 347 residues: GTPase Obg (347 aa).

Residues 1 to 159 enclose the Obg domain; it reads MKFVDEATIK…RVLRLELKLL (159 aa). The disordered stretch occupies residues 127-146; sequence NTRYKTSTNRAPRQSKPGTP. The segment covering 129 to 138 has biased composition (polar residues); the sequence is RYKTSTNRAP. Positions 160-334 constitute an OBG-type G domain; the sequence is ADVGLLGLPN…LMQAIMKYLE (175 aa). GTP-binding positions include 166 to 173, 191 to 195, 213 to 216, 284 to 287, and 315 to 317; these read GLPNAGKS, FTTLY, DIPG, NKID, and SAA. The Mg(2+) site is built by Ser-173 and Thr-193.

This sequence belongs to the TRAFAC class OBG-HflX-like GTPase superfamily. OBG GTPase family. In terms of assembly, monomer. Mg(2+) serves as cofactor.

It is found in the cytoplasm. Its function is as follows. An essential GTPase which binds GTP, GDP and possibly (p)ppGpp with moderate affinity, with high nucleotide exchange rates and a fairly low GTP hydrolysis rate. Plays a role in control of the cell cycle, stress response, ribosome biogenesis and in those bacteria that undergo differentiation, in morphogenesis control. This chain is GTPase Obg, found in Thioalkalivibrio sulfidiphilus (strain HL-EbGR7).